A 232-amino-acid chain; its full sequence is Ubiquinone biosynthesis O-methyltransferase (232 aa).

S-adenosyl-L-methionine-binding residues include R36, G55, D76, and L120.

It belongs to the methyltransferase superfamily. UbiG/COQ3 family.

The catalysed reaction is a 3-demethylubiquinol + S-adenosyl-L-methionine = a ubiquinol + S-adenosyl-L-homocysteine + H(+). It catalyses the reaction a 3-(all-trans-polyprenyl)benzene-1,2-diol + S-adenosyl-L-methionine = a 2-methoxy-6-(all-trans-polyprenyl)phenol + S-adenosyl-L-homocysteine + H(+). The protein operates within cofactor biosynthesis; ubiquinone biosynthesis. Its function is as follows. O-methyltransferase that catalyzes the 2 O-methylation steps in the ubiquinone biosynthetic pathway. This chain is Ubiquinone biosynthesis O-methyltransferase, found in Pseudomonas fluorescens (strain Pf0-1).